The primary structure comprises 180 residues: Segregation and condensation protein B (180 aa).

This sequence belongs to the ScpB family. Homodimer. Homodimerization may be required to stabilize the binding of ScpA to the Smc head domains. Component of a cohesin-like complex composed of ScpA, ScpB and the Smc homodimer, in which ScpA and ScpB bind to the head domain of Smc. The presence of the three proteins is required for the association of the complex with DNA.

It is found in the cytoplasm. In terms of biological role, participates in chromosomal partition during cell division. May act via the formation of a condensin-like complex containing Smc and ScpA that pull DNA away from mid-cell into both cell halves. The protein is Segregation and condensation protein B of Staphylococcus aureus (strain Mu3 / ATCC 700698).